We begin with the raw amino-acid sequence, 743 residues long: Zinc finger CCHC domain-containing protein 8 (743 aa).

Residues 29-67 (DSEGEANDVQELVSQHEETINRLSAENQELKRRLSLLNR) adopt a coiled-coil conformation. A CCHC-type zinc finger spans residues 213-230 (PCCFNCGSEEHQMRDCPK). 5 disordered regions span residues 390–432 (YLTD…SAVM), 449–518 (KGYM…VLDE), 540–566 (GEST…SRTE), 600–649 (EGGP…EDSN), and 662–700 (NKLS…VPDV). Over residues 399-413 (SSNKSNKRSSCQSSS) the composition is skewed to low complexity. A compositionally biased stretch (pro residues) spans 455–504 (PPLPPGSPSYGTPPPLPRGTPPSTPPNFIPPPPPTPTPPPLPKGTPPPTP). Composition is skewed to low complexity over residues 551-564 (TPIT…SPSR) and 601-637 (GGPL…GPLI). The segment covering 638–649 (PEEDSETNEDSN) has biased composition (acidic residues). Basic and acidic residues predominate over residues 666-677 (SKHENASEKNPS).

The protein belongs to the ZCCHC8 family.

The protein localises to the nucleus. It localises to the nucleoplasm. In terms of biological role, scaffolding subunit of the trimeric nuclear exosome targeting (NEXT) complex that is involved in the surveillance and turnover of aberrant transcripts and non-coding RNAs. NEXT functions as an RNA exosome cofactor that directs a subset of non-coding short-lived RNAs for exosomal degradation. May be involved in pre-mRNA splicing. It is required for 3'-end maturation of telomerase RNA component (TERC), TERC 3'-end targeting to the nuclear RNA exosome, and for telomerase function. The chain is Zinc finger CCHC domain-containing protein 8 (zcchc8) from Xenopus laevis (African clawed frog).